Consider the following 372-residue polypeptide: Protein phosphatase Mn(2+)-dependent 1K (372 aa).

Residues 1–29 (MSTAALITLVRSGGNQVRRRVLLSSRLLQ) constitute a mitochondrion transit peptide. The segment at 34–55 (VTPTCHSSTSEPRCSRFDPDGS) is disordered. A critical for association with the BCKDH complex region spans residues 46-61 (RCSRFDPDGSGSPATW). The PPM-type phosphatase domain maps to 94-346 (NVGCASQIGK…DNSTAVVVPF (253 aa)). Mn(2+)-binding residues include D127 and G128. S248 is modified (phosphoserine). 2 residues coordinate Mn(2+): D298 and D337.

Belongs to the PP2C family. As to quaternary structure, monomer. Interacts with E1 and E2 components of the branched-chain alpha-ketoacid dehydrogenase (BCKDH) complex; this interaction requires colocalization in mitochondria. Interacts with BCKDHA but not with BCKDHB of the E1 component. Interacts with the 24-meric E2 core composed of DBT monomers with a 24:1 stoichiometry; the N-terminal region (residues 49-61) of PPM1K and C-terminal linker of the lipoyl domain of DBT (residues 145-160) are critical for this interaction, whereas the lipoyl prosthetic group is dispensable. Competes with BCKDK for binding to the E2 core; this interaction is modulated by branched-chain alpha-keto acids. At steady state, BCKDH holoenzyme preferentially binds BCKDK and BCKDHA is phosphorylated. In response to high levels of branched-chain alpha-keto acids, the inhibitory BCKDK is replaced by activating PPM1K leading to BCKDHA dephosphorylation and BCAA degradation. Requires Mn(2+) as cofactor.

The protein localises to the mitochondrion matrix. It catalyses the reaction O-phospho-L-seryl-[3-methyl-2-oxobutanoate dehydrogenase] + H2O = L-seryl-[3-methyl-2-oxobutanoate dehydrogenase] + phosphate. The catalysed reaction is O-phospho-L-seryl-[protein] + H2O = L-seryl-[protein] + phosphate. Its pathway is protein modification. With respect to regulation, up-regulated upon interaction with the 24-meric DBT/E2 core of the BCKDH complex. Inhibited by Mg(2+) and Ca(2+) ions likely by competing with Mn(2+) ions for binding to the same metal-binding sites. Serine/threonine-protein phosphatase component of macronutrients metabolism. Forms a functional kinase and phosphatase pair with BCKDK, serving as a metabolic regulatory node that coordinates branched-chain amino acids (BCAAs) with glucose and lipid metabolism via two distinct phosphoprotein targets: mitochondrial BCKDHA subunit of the branched-chain alpha-ketoacid dehydrogenase (BCKDH) complex and cytosolic ACLY, a lipogenic enzyme of Krebs cycle. At high levels of branched-chain ketoacids, dephosphorylates and activates mitochondrial BCKDH complex, a multisubunit complex consisting of three multimeric components each involved in different steps of BCAA catabolism: E1 composed of BCKDHA and BCKDHB, E2 core composed of DBT monomers, and E3 composed of DLD monomers. Tightly associates with the E2 component of BCKDH complex and dephosphorylates BCKDHA on Ser-337. Regulates the reversible phosphorylation of ACLY in response to changes in cellular carbohydrate abundance such as occurs during fasting to feeding metabolic transition. At fasting state, appears to dephosphorylate ACLY on Ser-455 and inactivate it. Refeeding stimulates MLXIPL/ChREBP transcription factor, leading to increased BCKDK to PPM1K expression ratio, phosphorylation and activation of ACLY that ultimately results in the generation of malonyl-CoA and oxaloacetate immediate substrates of de novo lipogenesis and gluconeogenesis, respectively. Recognizes phosphosites having SxS or RxxS motifs and strictly depends on Mn(2+) ions for the phosphatase activity. Regulates Ca(2+)-induced opening of mitochondrial transition pore and apoptotic cell death. In Homo sapiens (Human), this protein is Protein phosphatase Mn(2+)-dependent 1K.